The primary structure comprises 321 residues: Transaldolase (321 aa).

Lys-132 acts as the Schiff-base intermediate with substrate in catalysis.

Belongs to the transaldolase family. Type 1 subfamily. As to quaternary structure, homodimer.

It is found in the cytoplasm. The enzyme catalyses D-sedoheptulose 7-phosphate + D-glyceraldehyde 3-phosphate = D-erythrose 4-phosphate + beta-D-fructose 6-phosphate. Its pathway is carbohydrate degradation; pentose phosphate pathway; D-glyceraldehyde 3-phosphate and beta-D-fructose 6-phosphate from D-ribose 5-phosphate and D-xylulose 5-phosphate (non-oxidative stage): step 2/3. Functionally, transaldolase is important for the balance of metabolites in the pentose-phosphate pathway. The chain is Transaldolase from Marinobacter nauticus (strain ATCC 700491 / DSM 11845 / VT8) (Marinobacter aquaeolei).